We begin with the raw amino-acid sequence, 43 residues long: Protein PsbN (43 aa).

A helical membrane pass occupies residues 5 to 27 (TLVAIFISCSLVSFTGYALYTAF).

This sequence belongs to the PsbN family.

Its subcellular location is the plastid. It localises to the chloroplast thylakoid membrane. In terms of biological role, may play a role in photosystem I and II biogenesis. The chain is Protein PsbN from Exsertotheca crispa (Moss).